The sequence spans 674 residues: Zyxin (674 aa).

Residues 35-447 (PPKPKVNPFR…PHQDQTSGSQ (413 aa)) are disordered. Positions 86 to 109 (LPPPPPNEEPMSPPGSSFPPPPPS) are enriched in pro residues. Over residues 110 to 120 (FGDDGPGSPLG) the composition is skewed to low complexity. Composition is skewed to pro residues over residues 121–148 (LFPP…PPPL), 162–180 (ASVP…PAPP), 187–209 (KPAP…PPQS), 222–240 (KPSP…PPVA), and 254–266 (AAPP…PPAP). Composition is skewed to basic and acidic residues over residues 328 to 341 (AKHE…KHEA) and 358 to 387 (QRDK…RGER). 3 consecutive LIM zinc-binding domains span residues 481–542 (ELCG…TLEC), 543–600 (CAVC…RRYA), and 601–671 (PRCT…RARA).

This sequence belongs to the zyxin/ajuba family. In terms of assembly, interacts (via LIM2 domain) with hesx1/anf1.

It localises to the cytoplasm. Its subcellular location is the cytoskeleton. The protein resides in the cell junction. The protein localises to the focal adhesion. Its function is as follows. Adhesion plaque protein. May be a component of a signal transduction pathway that mediates adhesion-stimulated changes in gene expression. Suppresses the transcription-repressing activity of hesx1/anf1. The polypeptide is Zyxin (Xenopus tropicalis (Western clawed frog)).